The primary structure comprises 96 residues: Class I hydrophobin 3 (96 aa).

The first 18 residues, 1 to 18 (MQFAKIASVLAMAAAAVA), serve as a signal peptide directing secretion. 4 disulfide bridges follow: cysteine 43/cysteine 72, cysteine 51/cysteine 66, cysteine 52/cysteine 57, and cysteine 73/cysteine 92.

It belongs to the fungal hydrophobin family.

Its subcellular location is the secreted. The protein resides in the cell wall. Aerial growth, conidiation, and dispersal of filamentous fungi in the environment rely upon a capability of their secreting small amphipathic proteins called hydrophobins (HPBs) with low sequence identity. Class I can self-assemble into an outermost layer of rodlet bundles on aerial cell surfaces, conferring cellular hydrophobicity that supports fungal growth, development and dispersal; whereas Class II form highly ordered films at water-air interfaces through intermolecular interactions but contribute nothing to the rodlet structure. Does not seem to be important for the ability to cause seedling disease. The protein is Class I hydrophobin 3 of Gibberella moniliformis (Maize ear and stalk rot fungus).